The chain runs to 397 residues: DNA excision repair protein ERCC-8 (397 aa).

5 WD repeats span residues 41–81 (IHGS…RQPH), 97–137 (VHKY…AADV), 184–224 (GHRQ…GCLL), 243–282 (AHNG…NTLV), and 332–371 (GHYK…PVPD). Residues S391, S392, and S393 each carry the phosphoserine modification.

Part of the CSA complex (also named DCX(ERCC8) complex), a DCX E3 ubiquitin-protein ligase complex containing ERCC8, RBX1, DDB1 and CUL4A; the CSA complex interacts with RNA polymerase II; upon UV irradiation it interacts with the COP9 signalosome and preferentially with the hyperphosphorylated form of RNA polymerase II. Interacts with ERCC6/CSB (via CIM motif); promoting recruitment to lesion-stalled RNA polymerase II (Pol II). Interacts with KIAA1530/UVSSA. Interacts with a subunit of RNA polymerase II TFIIH.

The protein localises to the nucleus. It is found in the chromosome. The protein resides in the nucleus matrix. It participates in protein modification; protein ubiquitination. In terms of biological role, substrate-recognition component of the CSA complex, a DCX (DDB1-CUL4-X-box) E3 ubiquitin-protein ligase complex, involved in transcription-coupled nucleotide excision repair (TC-NER), a process during which RNA polymerase II-blocking lesions are rapidly removed from the transcribed strand of active genes. Following recruitment to lesion-stalled RNA polymerase II (Pol II), the CSA complex mediates ubiquitination of Pol II subunit POLR2A/RPB1 at 'Lys-1268', a critical TC-NER checkpoint, governing RNA Pol II stability and initiating DNA damage excision by TFIIH recruitment. The CSA complex also promotes the ubiquitination and subsequent proteasomal degradation of ERCC6/CSB in a UV-dependent manner; ERCC6 degradation is essential for the recovery of RNA synthesis after transcription-coupled repair. Also plays a role in DNA double-strand breaks (DSSBs) repair by non-homologous end joining (NHEJ). This chain is DNA excision repair protein ERCC-8, found in Mus musculus (Mouse).